The following is a 316-amino-acid chain: MDVLLANPRGFCAGVDRAIEIVKRAIETLGAPIYVRHEVVHNRFVVDDLKQRGAIFVEELDEVPDDATVIFSAHGVSQAVRVEAERRGLKVFDATCPLVTKVHFEVARHCRAGRDVVLIGHAGHPEVEGTMGQWSRERGPGQIYLVEDIEQVATLQVRQPESLAYTTQTTLSVDDTMGIIEALRVRYPAMQGPKHDDICYATQNRQDAVRDLARQCDLVLVVGSPNSSNSNRLSELARRDGVESYLIDNASEIDPAWIVGKQHIGLTAGASAPQVLVDGVLARLRELGANGVSELAGEPESMVFALPKELRLRLVS.

Cys12 lines the [4Fe-4S] cluster pocket. The (2E)-4-hydroxy-3-methylbut-2-enyl diphosphate site is built by His41 and His74. Residues His41 and His74 each contribute to the dimethylallyl diphosphate site. Isopentenyl diphosphate-binding residues include His41 and His74. A [4Fe-4S] cluster-binding site is contributed by Cys96. His124 contacts (2E)-4-hydroxy-3-methylbut-2-enyl diphosphate. His124 serves as a coordination point for dimethylallyl diphosphate. An isopentenyl diphosphate-binding site is contributed by His124. Glu126 serves as the catalytic Proton donor. Residue Thr169 coordinates (2E)-4-hydroxy-3-methylbut-2-enyl diphosphate. Cys199 is a [4Fe-4S] cluster binding site. Residues Ser227, Ser228, Asn229, and Ser271 each contribute to the (2E)-4-hydroxy-3-methylbut-2-enyl diphosphate site. Dimethylallyl diphosphate-binding residues include Ser227, Ser228, Asn229, and Ser271. Isopentenyl diphosphate is bound by residues Ser227, Ser228, Asn229, and Ser271.

The protein belongs to the IspH family. Requires [4Fe-4S] cluster as cofactor.

The catalysed reaction is isopentenyl diphosphate + 2 oxidized [2Fe-2S]-[ferredoxin] + H2O = (2E)-4-hydroxy-3-methylbut-2-enyl diphosphate + 2 reduced [2Fe-2S]-[ferredoxin] + 2 H(+). The enzyme catalyses dimethylallyl diphosphate + 2 oxidized [2Fe-2S]-[ferredoxin] + H2O = (2E)-4-hydroxy-3-methylbut-2-enyl diphosphate + 2 reduced [2Fe-2S]-[ferredoxin] + 2 H(+). It participates in isoprenoid biosynthesis; dimethylallyl diphosphate biosynthesis; dimethylallyl diphosphate from (2E)-4-hydroxy-3-methylbutenyl diphosphate: step 1/1. Its pathway is isoprenoid biosynthesis; isopentenyl diphosphate biosynthesis via DXP pathway; isopentenyl diphosphate from 1-deoxy-D-xylulose 5-phosphate: step 6/6. Catalyzes the conversion of 1-hydroxy-2-methyl-2-(E)-butenyl 4-diphosphate (HMBPP) into a mixture of isopentenyl diphosphate (IPP) and dimethylallyl diphosphate (DMAPP). Acts in the terminal step of the DOXP/MEP pathway for isoprenoid precursor biosynthesis. The protein is 4-hydroxy-3-methylbut-2-enyl diphosphate reductase of Xanthomonas campestris pv. campestris (strain ATCC 33913 / DSM 3586 / NCPPB 528 / LMG 568 / P 25).